The following is a 440-amino-acid chain: tRNA(Ile)-lysidine synthase (440 aa).

31 to 36 (SGGADS) contacts ATP.

Belongs to the tRNA(Ile)-lysidine synthase family.

The protein localises to the cytoplasm. The enzyme catalyses cytidine(34) in tRNA(Ile2) + L-lysine + ATP = lysidine(34) in tRNA(Ile2) + AMP + diphosphate + H(+). Its function is as follows. Ligates lysine onto the cytidine present at position 34 of the AUA codon-specific tRNA(Ile) that contains the anticodon CAU, in an ATP-dependent manner. Cytidine is converted to lysidine, thus changing the amino acid specificity of the tRNA from methionine to isoleucine. This is tRNA(Ile)-lysidine synthase from Borrelia garinii subsp. bavariensis (strain ATCC BAA-2496 / DSM 23469 / PBi) (Borreliella bavariensis).